The sequence spans 372 residues: Chaperone protein DnaJ (372 aa).

In terms of domain architecture, J spans 5-70 (SYYDILGVSK…KKRQAYDQFG (66 aa)). A CR-type zinc finger spans residues 140-218 (GREYKIEIPR…CGGQGLQEKR (79 aa)). The Zn(2+) site is built by Cys153, Cys156, Cys170, Cys173, Cys192, Cys195, Cys206, and Cys209. CXXCXGXG motif repeat units lie at residues 153–160 (CVDCNGSG), 170–177 (CPDCGGSG), 192–199 (CPTCRGKG), and 206–213 (CRSCGGQG).

This sequence belongs to the DnaJ family. As to quaternary structure, homodimer. Requires Zn(2+) as cofactor.

The protein localises to the cytoplasm. In terms of biological role, participates actively in the response to hyperosmotic and heat shock by preventing the aggregation of stress-denatured proteins and by disaggregating proteins, also in an autonomous, DnaK-independent fashion. Unfolded proteins bind initially to DnaJ; upon interaction with the DnaJ-bound protein, DnaK hydrolyzes its bound ATP, resulting in the formation of a stable complex. GrpE releases ADP from DnaK; ATP binding to DnaK triggers the release of the substrate protein, thus completing the reaction cycle. Several rounds of ATP-dependent interactions between DnaJ, DnaK and GrpE are required for fully efficient folding. Also involved, together with DnaK and GrpE, in the DNA replication of plasmids through activation of initiation proteins. The polypeptide is Chaperone protein DnaJ (Leptospira interrogans serogroup Icterohaemorrhagiae serovar copenhageni (strain Fiocruz L1-130)).